Consider the following 305-residue polypeptide: Glycine--tRNA ligase alpha subunit (305 aa).

It belongs to the class-II aminoacyl-tRNA synthetase family. As to quaternary structure, tetramer of two alpha and two beta subunits.

The protein localises to the cytoplasm. It carries out the reaction tRNA(Gly) + glycine + ATP = glycyl-tRNA(Gly) + AMP + diphosphate. This chain is Glycine--tRNA ligase alpha subunit, found in Streptococcus pyogenes serotype M2 (strain MGAS10270).